We begin with the raw amino-acid sequence, 386 residues long: Patatin-2-Kuras 3 (386 aa).

The first 23 residues, methionine 1–alanine 23, serve as a signal peptide directing secretion. The region spanning leucine 32–leucine 229 is the PNPLA domain. A GXGXXG motif is present at residues glycine 36–glycine 41. Residues glycine 75–glycine 79 carry the GXSXG motif. Serine 77 serves as the catalytic Nucleophile. N-linked (GlcNAc...) asparagine glycosylation occurs at asparagine 115. The active-site Proton acceptor is the aspartate 215. Positions aspartate 215–alanine 217 match the DGA/G motif. Residues glutamate 321–alanine 384 are a coiled coil.

The protein belongs to the patatin family. In terms of tissue distribution, tuber.

It is found in the vacuole. In terms of biological role, probable lipolytic acyl hydrolase (LAH), an activity which is thought to be involved in the response of tubers to pathogens. This Solanum tuberosum (Potato) protein is Patatin-2-Kuras 3 (pat2-k3).